The sequence spans 433 residues: Tol-Pal system protein TolB (433 aa).

Positions 1 to 26 (MNKLRLFRSFFAFLLPFGMATGAAHG) are cleaved as a signal peptide.

The protein belongs to the TolB family. The Tol-Pal system is composed of five core proteins: the inner membrane proteins TolA, TolQ and TolR, the periplasmic protein TolB and the outer membrane protein Pal. They form a network linking the inner and outer membranes and the peptidoglycan layer.

The protein localises to the periplasm. Part of the Tol-Pal system, which plays a role in outer membrane invagination during cell division and is important for maintaining outer membrane integrity. This chain is Tol-Pal system protein TolB, found in Methylobacillus flagellatus (strain ATCC 51484 / DSM 6875 / VKM B-1610 / KT).